Here is a 235-residue protein sequence, read N- to C-terminus: Small ribosomal subunit protein uS2c (235 aa).

It belongs to the universal ribosomal protein uS2 family.

Its subcellular location is the plastid. It localises to the chloroplast. This Huperzia lucidula (Shining clubmoss) protein is Small ribosomal subunit protein uS2c (rps2).